The chain runs to 282 residues: MSNKIINLGSIEIANDKPFVLFGGMNVLESRDLAMSIAETYAEVTQKLGIPYVFKASFDKANRSSINSYRGPGMEEGLKIFEEIKKTFNLPLITDVHEVHQCAPVAEVVDIIQLPAFLARQTDLVVAMAKTGTIINVKKPQFLAPHEMRHIITKFNEAGNDEIILCERGSSFGYNNLVVDMLGMDEMKQSGYPVIFDATHALQRPGGRADSAGGRRAQAAELARSGMALGLAGLFIEAHPDPDNAKCDGPCALPLHQLENYLKQMKAIDDLVKSFDPIDTSK.

This sequence belongs to the KdsA family.

The protein resides in the cytoplasm. It carries out the reaction D-arabinose 5-phosphate + phosphoenolpyruvate + H2O = 3-deoxy-alpha-D-manno-2-octulosonate-8-phosphate + phosphate. Its pathway is carbohydrate biosynthesis; 3-deoxy-D-manno-octulosonate biosynthesis; 3-deoxy-D-manno-octulosonate from D-ribulose 5-phosphate: step 2/3. The protein operates within bacterial outer membrane biogenesis; lipopolysaccharide biosynthesis. The polypeptide is 2-dehydro-3-deoxyphosphooctonate aldolase (Shewanella baltica (strain OS185)).